The sequence spans 171 residues: Large ribosomal subunit protein bL9 (171 aa).

Belongs to the bacterial ribosomal protein bL9 family.

Its function is as follows. Binds to the 23S rRNA. This chain is Large ribosomal subunit protein bL9, found in Rickettsia typhi (strain ATCC VR-144 / Wilmington).